Reading from the N-terminus, the 493-residue chain is Adenylyltransferase and sulfurtransferase uba4 (493 aa).

ATP-binding positions include glycine 99, aspartate 120, 127 to 131 (SNLHR), lysine 144, and 188 to 189 (DN). Zn(2+) contacts are provided by cysteine 237 and cysteine 240. The Glycyl thioester intermediate; for adenylyltransferase activity role is filled by cysteine 254. The Zn(2+) site is built by cysteine 316 and cysteine 319. The region spanning 376–491 (INKEPTIIDV…WREQIDPDWP (116 aa)) is the Rhodanese domain. The active-site Cysteine persulfide intermediate; for sulfurtransferase activity is the cysteine 446.

It in the N-terminal section; belongs to the HesA/MoeB/ThiF family. UBA4 subfamily. Requires Zn(2+) as cofactor.

Its subcellular location is the cytoplasm. It localises to the cytosol. The catalysed reaction is [molybdopterin-synthase sulfur-carrier protein]-C-terminal Gly-Gly + ATP + H(+) = [molybdopterin-synthase sulfur-carrier protein]-C-terminal Gly-Gly-AMP + diphosphate. It carries out the reaction [molybdopterin-synthase sulfur-carrier protein]-C-terminal Gly-Gly-AMP + S-sulfanyl-L-cysteinyl-[cysteine desulfurase] + AH2 = [molybdopterin-synthase sulfur-carrier protein]-C-terminal-Gly-aminoethanethioate + L-cysteinyl-[cysteine desulfurase] + A + AMP + 2 H(+). Its pathway is tRNA modification; 5-methoxycarbonylmethyl-2-thiouridine-tRNA biosynthesis. It functions in the pathway cofactor biosynthesis; molybdopterin biosynthesis. Plays a central role in 2-thiolation of mcm(5)S(2)U at tRNA wobble positions of cytosolic tRNA(Lys), tRNA(Glu) and tRNA(Gln). Also essential during biosynthesis of the molybdenum cofactor. Acts by mediating the C-terminal thiocarboxylation of sulfur carriers urm1 and mocs2a. Its N-terminus first activates urm1 and mocs2a as acyl-adenylates (-COAMP), then the persulfide sulfur on the catalytic cysteine is transferred to urm1 and mocs2a to form thiocarboxylation (-COSH) of their C-terminus. The reaction probably involves hydrogen sulfide that is generated from the persulfide intermediate and that acts as a nucleophile towards urm1 and mocs2a. Subsequently, a transient disulfide bond is formed. Does not use thiosulfate as sulfur donor; nfs1 probably acting as a sulfur donor for thiocarboxylation reactions. This is Adenylyltransferase and sulfurtransferase uba4 from Aspergillus fumigatus (strain ATCC MYA-4609 / CBS 101355 / FGSC A1100 / Af293) (Neosartorya fumigata).